A 559-amino-acid chain; its full sequence is CCR4-NOT transcription complex subunit 6-like (559 aa).

Residues 1-148 (MPKEKYDPPD…LYQEPDGTRK (148 aa)) are required for interaction with cnot1, cnot3 and cnot7. The segment at 1–550 (MPKEKYDPPD…NGLHLPVHST (550 aa)) is nuclease domain. LRR repeat units follow at residues 52–73 (HLTALHINNNNLSRIPPEIAKL), 75–96 (HLVYLNLSSNKLRSLPAELGNM), 98–120 (TLRELLLNNNCLRVLPYELGRLF), and 121–143 (QLQTLGLKGNPLSQDILNLYQEP). Mg(2+) is bound at residue Glu-235. Residues Glu-235, Glu-271, His-353, and Pro-358 each contribute to the substrate site. Asp-405 lines the Mg(2+) pocket. Asp-405 functions as the Proton donor/acceptor in the catalytic mechanism. Residues Asn-407, Asn-474, and Phe-479 each contribute to the substrate site.

This sequence belongs to the CCR4/nocturin family. Component of the CCR4-NOT complex. Mg(2+) is required as a cofactor.

It is found in the cytoplasm. It localises to the nucleus. It catalyses the reaction Exonucleolytic cleavage of poly(A) to 5'-AMP.. Poly(A) nuclease with 3'-5' RNase activity. Catalytic component of the CCR4-NOT complex which is one of the major cellular mRNA deadenylases and is linked to various cellular processes including bulk mRNA degradation, miRNA-mediated repression, translational repression during translational initiation and general transcription regulation. Additional complex functions may be a consequence of its influence on mRNA expression. The protein is CCR4-NOT transcription complex subunit 6-like (cnot6l) of Danio rerio (Zebrafish).